The sequence spans 92 residues: MKILLAIALMLSTVMWVSTQQPQAVHTYCGRHLARTLADLCWEAGVDKRSGAQFASYGSAWLMPYSEGRGKRGIVDECCLRPCSVDVLLSYC.

An N-terminal signal peptide occupies residues 1 to 19; it reads MKILLAIALMLSTVMWVST. Position 20 is a pyrrolidone carboxylic acid (Gln20). Cystine bridges form between Cys29/Cys79, Cys41/Cys92, and Cys78/Cys83. Residues 50–70 constitute a propeptide, c peptide like; it reads SGAQFASYGSAWLMPYSEGRG.

Belongs to the insulin family. Heterodimer of a B chain and an A chain linked by two disulfide bonds.

The protein resides in the secreted. In terms of biological role, brain peptide responsible for activation of prothoracic glands to produce ecdysone in insects. The polypeptide is Bombyxin A-6 (BBXA6) (Bombyx mori (Silk moth)).